Reading from the N-terminus, the 352-residue chain is Phosphoribosylformylglycinamidine cyclo-ligase (352 aa).

This sequence belongs to the AIR synthase family.

The protein localises to the cytoplasm. The catalysed reaction is 2-formamido-N(1)-(5-O-phospho-beta-D-ribosyl)acetamidine + ATP = 5-amino-1-(5-phospho-beta-D-ribosyl)imidazole + ADP + phosphate + H(+). It participates in purine metabolism; IMP biosynthesis via de novo pathway; 5-amino-1-(5-phospho-D-ribosyl)imidazole from N(2)-formyl-N(1)-(5-phospho-D-ribosyl)glycinamide: step 2/2. The protein is Phosphoribosylformylglycinamidine cyclo-ligase of Pseudomonas putida (strain GB-1).